The chain runs to 446 residues: Glutamyl-tRNA reductase (446 aa).

Substrate contacts are provided by residues 49 to 52 (TCNR), Ser-109, 114 to 116 (ETQ), and Gln-120. Residue Cys-50 is the Nucleophile of the active site. 189-194 (GAGKMG) provides a ligand contact to NADP(+).

It belongs to the glutamyl-tRNA reductase family. Homodimer.

It carries out the reaction (S)-4-amino-5-oxopentanoate + tRNA(Glu) + NADP(+) = L-glutamyl-tRNA(Glu) + NADPH + H(+). Its pathway is porphyrin-containing compound metabolism; protoporphyrin-IX biosynthesis; 5-aminolevulinate from L-glutamyl-tRNA(Glu): step 1/2. Functionally, catalyzes the NADPH-dependent reduction of glutamyl-tRNA(Glu) to glutamate 1-semialdehyde (GSA). The chain is Glutamyl-tRNA reductase from Priestia megaterium (Bacillus megaterium).